Consider the following 471-residue polypeptide: ATP synthase subunit beta 1 (471 aa).

157–164 contributes to the ATP binding site; that stretch reads GGAGVGKT.

This sequence belongs to the ATPase alpha/beta chains family. In terms of assembly, F-type ATPases have 2 components, CF(1) - the catalytic core - and CF(0) - the membrane proton channel. CF(1) has five subunits: alpha(3), beta(3), gamma(1), delta(1), epsilon(1). CF(0) has three main subunits: a(1), b(2) and c(9-12). The alpha and beta chains form an alternating ring which encloses part of the gamma chain. CF(1) is attached to CF(0) by a central stalk formed by the gamma and epsilon chains, while a peripheral stalk is formed by the delta and b chains.

Its subcellular location is the cell inner membrane. It carries out the reaction ATP + H2O + 4 H(+)(in) = ADP + phosphate + 5 H(+)(out). In terms of biological role, produces ATP from ADP in the presence of a proton gradient across the membrane. The catalytic sites are hosted primarily by the beta subunits. This Pelobacter propionicus (strain DSM 2379 / NBRC 103807 / OttBd1) protein is ATP synthase subunit beta 1.